Here is a 116-residue protein sequence, read N- to C-terminus: Phosphoribosyl-AMP cyclohydrolase (116 aa).

Asp-80 provides a ligand contact to Mg(2+). Cys-81 provides a ligand contact to Zn(2+). Residues Asp-82 and Asp-84 each coordinate Mg(2+). Zn(2+)-binding residues include Cys-98 and Cys-105.

This sequence belongs to the PRA-CH family. As to quaternary structure, homodimer. Mg(2+) is required as a cofactor. Requires Zn(2+) as cofactor.

The protein resides in the cytoplasm. It carries out the reaction 1-(5-phospho-beta-D-ribosyl)-5'-AMP + H2O = 1-(5-phospho-beta-D-ribosyl)-5-[(5-phospho-beta-D-ribosylamino)methylideneamino]imidazole-4-carboxamide. Its pathway is amino-acid biosynthesis; L-histidine biosynthesis; L-histidine from 5-phospho-alpha-D-ribose 1-diphosphate: step 3/9. Its function is as follows. Catalyzes the hydrolysis of the adenine ring of phosphoribosyl-AMP. This Trichormus variabilis (strain ATCC 29413 / PCC 7937) (Anabaena variabilis) protein is Phosphoribosyl-AMP cyclohydrolase.